We begin with the raw amino-acid sequence, 43 residues long: Protein PsbN (43 aa).

The chain crosses the membrane as a helical span at residues 5 to 25 (TLISVFVASLVIGITAYAIFV).

It belongs to the PsbN family.

The protein localises to the plastid. Its subcellular location is the chloroplast thylakoid membrane. Functionally, may play a role in photosystem I and II biogenesis. This chain is Protein PsbN, found in Cyanidioschyzon merolae (strain NIES-3377 / 10D) (Unicellular red alga).